The primary structure comprises 466 residues: Coagulation factor VII (466 aa).

Residues 1–20 (MVSQALRLLCLLLGLQGCLA) form the signal peptide. The propeptide occupies 21–60 (AGGVAKASGGETRDMPWKPGPHRVFVTQEEAHGVLHRRRR). In terms of domain architecture, Gla spans 61–105 (ANAFLEELRPGSLERECKEEQCSFEEAREIFKDAERTKLFWISYS). Residues glutamate 66, glutamate 67, glutamate 74, glutamate 76, glutamate 79, glutamate 80, glutamate 85, glutamate 86, glutamate 89, and glutamate 95 each carry the 4-carboxyglutamate modification. A disulfide bond links cysteine 77 and cysteine 82. Positions 106 to 142 (DGDQCASSPCQNGGSCKDQLQSYICFCLPAFEGRNCE) constitute an EGF-like 1; calcium-binding domain. 10 disulfide bridges follow: cysteine 110–cysteine 121, cysteine 115–cysteine 130, cysteine 132–cysteine 141, cysteine 151–cysteine 162, cysteine 158–cysteine 172, cysteine 174–cysteine 187, cysteine 195–cysteine 322, cysteine 219–cysteine 224, cysteine 238–cysteine 254, and cysteine 370–cysteine 389. O-linked (Glc...) serine; alternate glycosylation occurs at serine 112. Serine 112 carries an O-linked (Xyl...) serine; alternate glycan. Serine 120 is a glycosylation site (O-linked (Fuc) serine). Position 123 is a (3R)-3-hydroxyaspartate (aspartate 123). The 42-residue stretch at 147 to 188 (DQLICVNENGGCEQYCSDHTGTKRSCRCHEGYSLLADGVSCT) folds into the EGF-like 2 domain. Residue asparagine 205 is glycosylated (N-linked (GlcNAc...) asparagine). The Peptidase S1 domain occupies 213-452 (IVGGKVCPKG…YIEWLQKLMR (240 aa)). Catalysis depends on charge relay system residues histidine 253 and aspartate 302. Asparagine 382 carries N-linked (GlcNAc...) asparagine glycosylation. Position 398 (aspartate 398) interacts with substrate. Cysteine 400 and cysteine 428 are joined by a disulfide. Serine 404 functions as the Charge relay system in the catalytic mechanism.

Belongs to the peptidase S1 family. Heterodimer of a light chain and a heavy chain linked by a disulfide bond. Interacts (activated) with iripin-8, a serine protease inhibitor from Ixodes ricinus saliva. In terms of processing, the vitamin K-dependent, enzymatic carboxylation of some glutamate residues allows the modified protein to bind calcium. The iron and 2-oxoglutarate dependent 3-hydroxylation of aspartate and asparagine is (R) stereospecific within EGF domains. Post-translationally, O- and N-glycosylated. N-glycosylation at Asn-205 occurs cotranslationally and is mediated by STT3A-containing complexes, while glycosylation at Asn-382 is post-translational and is mediated STT3B-containing complexes before folding. O-fucosylated by POFUT1 on a conserved serine or threonine residue found in the consensus sequence C2-X(4,5)-[S/T]-C3 of EGF domains, where C2 and C3 are the second and third conserved cysteines. In terms of processing, can be either O-glucosylated or O-xylosylated at Ser-112 by POGLUT1 in vitro. As to expression, plasma.

Its subcellular location is the secreted. The enzyme catalyses Selective cleavage of Arg-|-Ile bond in factor X to form factor Xa.. Its function is as follows. Initiates the extrinsic pathway of blood coagulation. Serine protease that circulates in the blood in a zymogen form. Factor VII is converted to factor VIIa by factor Xa, factor XIIa, factor IXa, or thrombin by minor proteolysis. In the presence of tissue factor and calcium ions, factor VIIa then converts factor X to factor Xa by limited proteolysis. Factor VIIa also converts factor IX to factor IXa in the presence of tissue factor and calcium. In Homo sapiens (Human), this protein is Coagulation factor VII (F7).